A 543-amino-acid polypeptide reads, in one-letter code: CTP synthase (543 aa).

The interval 1 to 265 (MTRYIFVTGG…DDFVVERFGL (265 aa)) is amidoligase domain. Ser-13 lines the CTP pocket. Ser-13 contributes to the UTP binding site. Residues 14–19 (SLGKGI) and Asp-71 contribute to the ATP site. Residues Asp-71 and Glu-139 each contribute to the Mg(2+) site. Residues 146–148 (DIE), 186–191 (KTKPTQ), and Lys-222 contribute to the CTP site. UTP-binding positions include 186-191 (KTKPTQ) and Lys-222. Residues 290–541 (TIAMVGKYME…VNAALAQKAK (252 aa)) enclose the Glutamine amidotransferase type-1 domain. Gly-351 contributes to the L-glutamine binding site. Cys-378 (nucleophile; for glutamine hydrolysis) is an active-site residue. L-glutamine is bound by residues 379 to 382 (LGMQ), Glu-402, and Arg-469. Active-site residues include His-514 and Glu-516.

This sequence belongs to the CTP synthase family. Homotetramer.

It catalyses the reaction UTP + L-glutamine + ATP + H2O = CTP + L-glutamate + ADP + phosphate + 2 H(+). The catalysed reaction is L-glutamine + H2O = L-glutamate + NH4(+). The enzyme catalyses UTP + NH4(+) + ATP = CTP + ADP + phosphate + 2 H(+). It participates in pyrimidine metabolism; CTP biosynthesis via de novo pathway; CTP from UDP: step 2/2. Allosterically activated by GTP, when glutamine is the substrate; GTP has no effect on the reaction when ammonia is the substrate. The allosteric effector GTP functions by stabilizing the protein conformation that binds the tetrahedral intermediate(s) formed during glutamine hydrolysis. Inhibited by the product CTP, via allosteric rather than competitive inhibition. Catalyzes the ATP-dependent amination of UTP to CTP with either L-glutamine or ammonia as the source of nitrogen. Regulates intracellular CTP levels through interactions with the four ribonucleotide triphosphates. The chain is CTP synthase from Ectopseudomonas mendocina (strain ymp) (Pseudomonas mendocina).